We begin with the raw amino-acid sequence, 341 residues long: ATPase GET3 (341 aa).

ATP is bound at residue 34 to 41 (KGGVGKTT). Residue Asp63 is part of the active site. ATP contacts are provided by Glu245 and Asn272. Cys283 and Cys286 together coordinate Zn(2+).

The protein belongs to the arsA ATPase family. As to quaternary structure, homodimer.

It localises to the cytoplasm. It is found in the endoplasmic reticulum. Functionally, ATPase required for the post-translational delivery of tail-anchored (TA) proteins to the endoplasmic reticulum. Recognizes and selectively binds the transmembrane domain of TA proteins in the cytosol. This complex then targets to the endoplasmic reticulum by membrane-bound receptors, where the tail-anchored protein is released for insertion. This process is regulated by ATP binding and hydrolysis. ATP binding drives the homodimer towards the closed dimer state, facilitating recognition of newly synthesized TA membrane proteins. ATP hydrolysis is required for insertion. Subsequently, the homodimer reverts towards the open dimer state, lowering its affinity for the membrane-bound receptor, and returning it to the cytosol to initiate a new round of targeting. The protein is ATPase GET3 of Paracoccidioides lutzii (strain ATCC MYA-826 / Pb01) (Paracoccidioides brasiliensis).